The following is a 156-amino-acid chain: Small ribosomal subunit protein uS7 (156 aa).

It belongs to the universal ribosomal protein uS7 family. In terms of assembly, part of the 30S ribosomal subunit. Contacts proteins S9 and S11.

In terms of biological role, one of the primary rRNA binding proteins, it binds directly to 16S rRNA where it nucleates assembly of the head domain of the 30S subunit. Is located at the subunit interface close to the decoding center, probably blocks exit of the E-site tRNA. This chain is Small ribosomal subunit protein uS7, found in Campylobacter concisus (strain 13826).